The sequence spans 517 residues: Light-independent protochlorophyllide reductase subunit B (517 aa).

[4Fe-4S] cluster is bound at residue Asp36. Catalysis depends on Asp285, which acts as the Proton donor. Gly420–Leu421 contacts substrate.

This sequence belongs to the ChlB/BchB/BchZ family. Protochlorophyllide reductase is composed of three subunits; BchL, BchN and BchB. Forms a heterotetramer of two BchB and two BchN subunits. It depends on [4Fe-4S] cluster as a cofactor.

The enzyme catalyses chlorophyllide a + oxidized 2[4Fe-4S]-[ferredoxin] + 2 ADP + 2 phosphate = protochlorophyllide a + reduced 2[4Fe-4S]-[ferredoxin] + 2 ATP + 2 H2O. The protein operates within porphyrin-containing compound metabolism; bacteriochlorophyll biosynthesis (light-independent). Its function is as follows. Component of the dark-operative protochlorophyllide reductase (DPOR) that uses Mg-ATP and reduced ferredoxin to reduce ring D of protochlorophyllide (Pchlide) to form chlorophyllide a (Chlide). This reaction is light-independent. The NB-protein (BchN-BchB) is the catalytic component of the complex. The protein is Light-independent protochlorophyllide reductase subunit B of Bradyrhizobium sp. (strain BTAi1 / ATCC BAA-1182).